Reading from the N-terminus, the 102-residue chain is Large ribosomal subunit protein uL24 (102 aa).

The protein belongs to the universal ribosomal protein uL24 family. In terms of assembly, part of the 50S ribosomal subunit.

In terms of biological role, one of two assembly initiator proteins, it binds directly to the 5'-end of the 23S rRNA, where it nucleates assembly of the 50S subunit. Its function is as follows. One of the proteins that surrounds the polypeptide exit tunnel on the outside of the subunit. This is Large ribosomal subunit protein uL24 from Polynucleobacter asymbioticus (strain DSM 18221 / CIP 109841 / QLW-P1DMWA-1) (Polynucleobacter necessarius subsp. asymbioticus).